Here is a 21-residue protein sequence, read N- to C-terminus: Granulitoxin (21 aa).

A disordered region spans residues 1 to 21 (AKTGILDSDGPTVAGNSLSGT).

It is found in the secreted. It localises to the nematocyst. Functionally, injection into mice produces severe neurotoxic effects such as circular movements, aggressive behavior, dyspnea, tonic-clonic convulsion and death. In Bunodosoma cangicum (Sea anemone), this protein is Granulitoxin.